Reading from the N-terminus, the 538-residue chain is Bifunctional purine biosynthesis protein PurH (538 aa).

One can recognise an MGS-like domain in the interval 8 to 158; that stretch reads FPIPDLHRVR…KNHVYTGVIT (151 aa).

This sequence belongs to the PurH family.

The enzyme catalyses (6R)-10-formyltetrahydrofolate + 5-amino-1-(5-phospho-beta-D-ribosyl)imidazole-4-carboxamide = 5-formamido-1-(5-phospho-D-ribosyl)imidazole-4-carboxamide + (6S)-5,6,7,8-tetrahydrofolate. The catalysed reaction is IMP + H2O = 5-formamido-1-(5-phospho-D-ribosyl)imidazole-4-carboxamide. The protein operates within purine metabolism; IMP biosynthesis via de novo pathway; 5-formamido-1-(5-phospho-D-ribosyl)imidazole-4-carboxamide from 5-amino-1-(5-phospho-D-ribosyl)imidazole-4-carboxamide (10-formyl THF route): step 1/1. It participates in purine metabolism; IMP biosynthesis via de novo pathway; IMP from 5-formamido-1-(5-phospho-D-ribosyl)imidazole-4-carboxamide: step 1/1. This Bartonella henselae (strain ATCC 49882 / DSM 28221 / CCUG 30454 / Houston 1) (Rochalimaea henselae) protein is Bifunctional purine biosynthesis protein PurH.